Reading from the N-terminus, the 124-residue chain is Aspartate 1-decarboxylase (124 aa).

The active-site Schiff-base intermediate with substrate; via pyruvic acid is the Ser-25. Residue Ser-25 is modified to Pyruvic acid (Ser). Thr-57 contacts substrate. Tyr-58 functions as the Proton donor in the catalytic mechanism. Gly-73 to Ala-75 is a substrate binding site.

This sequence belongs to the PanD family. In terms of assembly, heterooctamer of four alpha and four beta subunits. Pyruvate serves as cofactor. Is synthesized initially as an inactive proenzyme, which is activated by self-cleavage at a specific serine bond to produce a beta-subunit with a hydroxyl group at its C-terminus and an alpha-subunit with a pyruvoyl group at its N-terminus.

It is found in the cytoplasm. It carries out the reaction L-aspartate + H(+) = beta-alanine + CO2. Its pathway is cofactor biosynthesis; (R)-pantothenate biosynthesis; beta-alanine from L-aspartate: step 1/1. Catalyzes the pyruvoyl-dependent decarboxylation of aspartate to produce beta-alanine. This Clostridium beijerinckii (strain ATCC 51743 / NCIMB 8052) (Clostridium acetobutylicum) protein is Aspartate 1-decarboxylase.